A 95-amino-acid polypeptide reads, in one-letter code: Protein TusB (95 aa).

Belongs to the DsrH/TusB family. As to quaternary structure, heterohexamer, formed by a dimer of trimers. The hexameric TusBCD complex contains 2 copies each of TusB, TusC and TusD. The TusBCD complex interacts with TusE.

It localises to the cytoplasm. In terms of biological role, part of a sulfur-relay system required for 2-thiolation of 5-methylaminomethyl-2-thiouridine (mnm(5)s(2)U) at tRNA wobble positions. The sequence is that of Protein TusB from Salmonella agona (strain SL483).